The primary structure comprises 367 residues: Outer membrane porin C (367 aa).

The first 21 residues, 1-21, serve as a signal peptide directing secretion; it reads MKVKVLSLLVPALLVAGAANA.

The protein belongs to the Gram-negative porin family. As to quaternary structure, homotrimer.

It is found in the cell outer membrane. In terms of biological role, forms pores that allow passive diffusion of small molecules across the outer membrane. The protein is Outer membrane porin C (ompC) of Escherichia coli O157:H7.